A 703-amino-acid chain; its full sequence is MTTARIPVDELTEEQAKDELARLAQEIGRHDRLYYSEDAPEVSDAEYDALRRRNLAIEQAFPNLIRADSPSKRIGAPAVEKFEKVRHKVPMLSLDNAFTDDDVVDFVARVRRFLKMEPHAPIAMTAEPKIDGLSLSIRYENGRLVSAATRGDGQVGENVTANARAVADIPNVLSGDFPEILEVRGEVYMTHRDFLALNERQRAEGKQTYVNPRNTAAGSLRQLDASITAARPLKFFAYAWGEVSEMPSQTQMGMVEALKSYGFRTNKLMCLCETARELLEHYHAIEERRATLGYDIDGVVYKVNDLALQQRLGYVSRSPRWAIAHKFAAEKAFTILRDIDIQVGRTGALTPVARLEPVTVGGVVVTNATLHNAEEIERLGIKIGDTVQVQRAGDVIPQILGYAEDRRPADAKEFVFPSVCPCELKTPVVRDSTAGGGEGVVRRCSGEFACPFQRIEHLRLFVSRRAFDIEGLGEKQIEFFFRDPDLPVKSPADIFTLAERDAQNIKKLKDKEGWGTVSAGNLFAAIEAKRTIPLDRMIYGLGIRHVGERTAVTLARGYGSWKAFHDSALAIAGGDLSAREEMDALEDIGDAVIDAIATYFAEEHNCRLVEALAAQVNVLEAERPVADSPVAGKTIVFTGALERMSRDEAKDMAERLGAKVAGSVSSKTDLVVAGPGAGSKLKKAAELGIEVIDEDMWFQRIGA.

NAD(+)-binding positions include Asp44 to Asp48, Ser93 to Leu94, and Glu127. Lys129 serves as the catalytic N6-AMP-lysine intermediate. Arg150, Glu186, Lys302, and Lys326 together coordinate NAD(+). Cys420, Cys422, Cys444, and Cys450 together coordinate Zn(2+). The region spanning Val625–Ala703 is the BRCT domain.

This sequence belongs to the NAD-dependent DNA ligase family. LigA subfamily. The cofactor is Mg(2+). It depends on Mn(2+) as a cofactor.

The catalysed reaction is NAD(+) + (deoxyribonucleotide)n-3'-hydroxyl + 5'-phospho-(deoxyribonucleotide)m = (deoxyribonucleotide)n+m + AMP + beta-nicotinamide D-nucleotide.. Its function is as follows. DNA ligase that catalyzes the formation of phosphodiester linkages between 5'-phosphoryl and 3'-hydroxyl groups in double-stranded DNA using NAD as a coenzyme and as the energy source for the reaction. It is essential for DNA replication and repair of damaged DNA. This is DNA ligase from Chelativorans sp. (strain BNC1).